The sequence spans 224 residues: Cutinase 1 (224 aa).

The signal sequence occupies residues 1–16 (MKFLSVLSLAITLAAA). Cys-46 and Cys-125 are oxidised to a cystine. Ser-136 functions as the Nucleophile in the catalytic mechanism. Cysteines 187 and 194 form a disulfide. Residue Asp-191 is part of the active site. His-204 acts as the Proton donor/acceptor in catalysis.

Belongs to the cutinase family. Post-translationally, the 2 disulfide bonds play a critical role in holding the catalytic residues in juxta-position; reduction of the disulfide bridges results in the complete inactivation of the enzyme. The N-terminus is blocked.

Its subcellular location is the secreted. The enzyme catalyses cutin + H2O = cutin monomers.. With respect to regulation, inhibited by diisopropyl fluorophosphate (DFP). Functionally, catalyzes the hydrolysis of complex carboxylic polyesters found in the cell wall of plants. Degrades cutin, a macromolecule that forms the structure of the plant cuticle. Allows pathogenic fungi to penetrate through the cuticular barrier into the host plant during the initial stage of fungal infection. This Colletotrichum gloeosporioides (Anthracnose fungus) protein is Cutinase 1 (CUTA).